Reading from the N-terminus, the 72-residue chain is UPF0270 protein Ent638_3781 (72 aa).

This sequence belongs to the UPF0270 family.

The chain is UPF0270 protein Ent638_3781 from Enterobacter sp. (strain 638).